The primary structure comprises 275 residues: Uridine-5'-phosphate dioxygenase (275 aa).

Fe cation-binding residues include histidine 105, aspartate 107, and histidine 247.

Fe(2+) is required as a cofactor.

The catalysed reaction is UMP + 2-oxoglutarate + O2 = uridine-5'-aldehyde + succinate + phosphate + CO2. Its pathway is antibiotic biosynthesis. Enhanced by ascorbic acid and inhibited by Zn(2+). In terms of biological role, dioxygenase involved in the biosynthesis of the capuramycin-type nucleoside antibiotic A-102395. Catalyzes the dephosphorylation and oxidation of UMP to generate uridine-5'-aldehyde. Can also use the alternative alpha-keto acids pyruvate and alpha-ketoadipate (2-oxoadipate), with very low efficiency. Cannot use alpha-ketobutyrate, alpha-ketovalerate and oxaloacetate. This Amycolatopsis sp protein is Uridine-5'-phosphate dioxygenase.